The primary structure comprises 73 residues: Alpha-bungarotoxin N3 (73 aa).

Intrachain disulfides connect Cys3–Cys23, Cys16–Cys43, Cys28–Cys32, Cys47–Cys58, and Cys59–Cys64.

The protein belongs to the three-finger toxin family. Long-chain subfamily. Type II alpha-neurotoxin sub-subfamily. Monomer in solution, homodimer in crystal state. In terms of tissue distribution, expressed by the venom gland.

The protein resides in the secreted. In terms of biological role, binds with high affinity to muscular (alpha-1/CHRNA1) and neuronal (alpha-7/CHRNA7) nicotinic acetylcholine receptor (nAChR) and inhibits acetylcholine from binding to the receptor, thereby impairing neuromuscular and neuronal transmission. Mice injected with this toxin develop flaccid paralysis followed by death. Irreversibly inhibits twitches in a concentration-dependent manner in rat phrenic nerve-hemidiaphragm and chick biventer cervicis muscle. This Bungarus candidus (Malayan krait) protein is Alpha-bungarotoxin N3.